Reading from the N-terminus, the 548-residue chain is Folylpolyglutamate synthase (548 aa).

130–133 (GKGS) serves as a coordination point for ATP. Residues serine 157, glutamate 234, and histidine 262 each contribute to the Mg(2+) site. 2 residues coordinate ATP: arginine 382 and aspartate 396.

Belongs to the folylpolyglutamate synthase family. A monovalent cation serves as cofactor.

It localises to the mitochondrion inner membrane. Its subcellular location is the mitochondrion matrix. The protein localises to the cytoplasm. The catalysed reaction is (6S)-5,6,7,8-tetrahydrofolyl-(gamma-L-Glu)(n) + L-glutamate + ATP = (6S)-5,6,7,8-tetrahydrofolyl-(gamma-L-Glu)(n+1) + ADP + phosphate + H(+). Its pathway is cofactor biosynthesis; tetrahydrofolylpolyglutamate biosynthesis. In terms of biological role, catalyzes conversion of folates to polyglutamate derivatives allowing concentration of folate compounds in the cell and the intracellular retention of these cofactors, which are important substrates for most of the folate-dependent enzymes that are involved in one-carbon transfer reactions involved in purine, pyrimidine and amino acid synthesis. Required for methionine synthesis and maintenance of intact mitochondrial DNA. Involved in telomere maintenance. In Saccharomyces cerevisiae (strain FostersO) (Baker's yeast), this protein is Folylpolyglutamate synthase.